We begin with the raw amino-acid sequence, 204 residues long: Putative AgrB-like protein (204 aa).

4 helical membrane-spanning segments follow: residues 52-74 (YGIALVTGLLLQTVTVHLSYLWL), 87-107 (LNCTLISLMMFVLAPFVFQNI), 111-131 (NWIVLGTFGFILLNMFLFAPA), and 156-176 (LILTGIALLIPFAEMKTLIMV).

Belongs to the AgrB family.

The protein localises to the cell membrane. Its function is as follows. May be involved in the proteolytic processing of a quorum sensing system signal molecule precursor. This chain is Putative AgrB-like protein, found in Listeria monocytogenes serotype 4b (strain CLIP80459).